A 113-amino-acid polypeptide reads, in one-letter code: Cell cycle protein GpsB (113 aa).

A coiled-coil region spans residues 36 to 65; it reads IKDYETYAALVKSLRQEIADLKEELARKPQ. Residues 61–82 are disordered; it reads ARKPQVSSAPSPSHPDPIDVAA.

It belongs to the GpsB family. In terms of assembly, forms polymers through the coiled coil domains. Interacts with PBP1, MreC and EzrA.

It localises to the cytoplasm. Its function is as follows. Divisome component that associates with the complex late in its assembly, after the Z-ring is formed, and is dependent on DivIC and PBP2B for its recruitment to the divisome. Together with EzrA, is a key component of the system that regulates PBP1 localization during cell cycle progression. Its main role could be the removal of PBP1 from the cell pole after pole maturation is completed. Also contributes to the recruitment of PBP1 to the division complex. Not essential for septum formation. The sequence is that of Cell cycle protein GpsB from Streptococcus pneumoniae (strain Hungary19A-6).